A 245-amino-acid chain; its full sequence is Ribosomal RNA large subunit methyltransferase E (245 aa).

Residues Gly-58, Trp-60, Asp-78, Asp-96, and Asp-123 each coordinate S-adenosyl-L-methionine. The Proton acceptor role is filled by Lys-163.

It belongs to the class I-like SAM-binding methyltransferase superfamily. RNA methyltransferase RlmE family.

The protein resides in the cytoplasm. It catalyses the reaction uridine(2552) in 23S rRNA + S-adenosyl-L-methionine = 2'-O-methyluridine(2552) in 23S rRNA + S-adenosyl-L-homocysteine + H(+). Its function is as follows. Specifically methylates the uridine in position 2552 of 23S rRNA at the 2'-O position of the ribose in the fully assembled 50S ribosomal subunit. The protein is Ribosomal RNA large subunit methyltransferase E of Methanocaldococcus jannaschii (strain ATCC 43067 / DSM 2661 / JAL-1 / JCM 10045 / NBRC 100440) (Methanococcus jannaschii).